The primary structure comprises 147 residues: D-aminoacyl-tRNA deacylase (147 aa).

Residues 136–137 carry the Gly-cisPro motif, important for rejection of L-amino acids motif; sequence GP.

This sequence belongs to the DTD family. As to quaternary structure, homodimer.

The protein resides in the cytoplasm. It catalyses the reaction glycyl-tRNA(Ala) + H2O = tRNA(Ala) + glycine + H(+). The catalysed reaction is a D-aminoacyl-tRNA + H2O = a tRNA + a D-alpha-amino acid + H(+). Functionally, an aminoacyl-tRNA editing enzyme that deacylates mischarged D-aminoacyl-tRNAs. Also deacylates mischarged glycyl-tRNA(Ala), protecting cells against glycine mischarging by AlaRS. Acts via tRNA-based rather than protein-based catalysis; rejects L-amino acids rather than detecting D-amino acids in the active site. By recycling D-aminoacyl-tRNA to D-amino acids and free tRNA molecules, this enzyme counteracts the toxicity associated with the formation of D-aminoacyl-tRNA entities in vivo and helps enforce protein L-homochirality. This chain is D-aminoacyl-tRNA deacylase, found in Streptococcus pneumoniae serotype 4 (strain ATCC BAA-334 / TIGR4).